The chain runs to 299 residues: Trans-aconitate 3-methyltransferase (299 aa).

S2 bears the N-acetylserine mark.

This sequence belongs to the methyltransferase superfamily. Tam family.

It localises to the cytoplasm. The catalysed reaction is trans-aconitate + S-adenosyl-L-methionine = (E)-2-(methoxycarbonylmethyl)but-2-enedioate + S-adenosyl-L-homocysteine. Catalyzes the S-adenosylmethionine monomethyl esterification of trans-aconitate and 3-isopropylmalate at high affinity and of other molecules like cis-aconitate, isocitrate, and citrate at lower velocities and affinities. The function of trans-aconitate methylation appears to be in reducing the toxicity of this spontaneous breakdown product of cis-aconitate. The role of 3-isopropylmalate methylation is unclear but may represent a metabolic branch at 3-isopropylmalate, where some of the material is taken in the pathway leading to leucine and some is taken in a pathway to the 3-isopropylmalate methyl ester, a molecule that provides a signal to switch from vegetative to invasive growth in response to amino acid starvation. This is Trans-aconitate 3-methyltransferase (TMT1) from Saccharomyces cerevisiae (strain ATCC 204508 / S288c) (Baker's yeast).